The following is a 221-amino-acid chain: Serotriflin (221 aa).

The SCP domain occupies 19 to 147; that stretch reads LDKHNALRRS…SYNYYYVCHY (129 aa). Asn-48 carries an N-linked (GlcNAc...) asparagine glycan. Disulfide bonds link Cys-56/Cys-134, Cys-73/Cys-148, Cys-129/Cys-145, Cys-167/Cys-174, Cys-170/Cys-179, Cys-183/Cys-216, Cys-192/Cys-210, and Cys-201/Cys-214. Residues 183–216 form the ShKT domain; that stretch reads CKHVDRYSNCNSLVQQISCQSNNMNTDCPASCFC.

As to quaternary structure, forms a stable, non-covalent complex with SSP-2.

It is found in the secreted. The sequence is that of Serotriflin from Protobothrops flavoviridis (Habu).